The following is a 559-amino-acid chain: Excitatory amino acid transporter 5 (559 aa).

Topologically, residues 1-16 (MVLDAVLARGRTVCKH) are cytoplasmic. The next 3 helical transmembrane spans lie at 17-37 (NGLL…GFFL), 60-80 (MLKM…LASL), and 94-114 (AYYL…VSII). The Extracellular segment spans residues 115-215 (HPGGAAQKET…EIVYKSEPGT (101 aa)). Asparagine 190 carries N-linked (GlcNAc...) asparagine glycosylation. Residues 216-236 (SDGMNVLGIVIFSATMGIMLG) form a helical membrane-spanning segment. N-linked (GlcNAc...) asparagine glycosylation is present at asparagine 253. 6 helical membrane-spanning segments follow: residues 259-279 (IVAV…AGKI), 298-318 (TVVC…YFLI), 329-349 (GVLQ…TLPI), 371-391 (VGAT…AIFI), 413-433 (AASI…VIVL), and 456-476 (FRTM…AHIC).

The protein belongs to the dicarboxylate/amino acid:cation symporter (DAACS) (TC 2.A.23) family. SLC1A7 subfamily. As to quaternary structure, interacts with the PDZ domains of DLG4. In terms of tissue distribution, expressed in retina, located in both cone and rod photoreceptor terminals and in axon terminals of rod bipolar cells.

The protein resides in the photoreceptor inner segment membrane. Its subcellular location is the synaptic cell membrane. The enzyme catalyses K(+)(in) + L-glutamate(out) + 3 Na(+)(out) + H(+)(out) = K(+)(out) + L-glutamate(in) + 3 Na(+)(in) + H(+)(in). It carries out the reaction K(+)(in) + L-aspartate(out) + 3 Na(+)(out) + H(+)(out) = K(+)(out) + L-aspartate(in) + 3 Na(+)(in) + H(+)(in). The catalysed reaction is D-aspartate(out) + K(+)(in) + 3 Na(+)(out) + H(+)(out) = D-aspartate(in) + K(+)(out) + 3 Na(+)(in) + H(+)(in). Functionally, sodium-dependent, high-affinity amino acid transporter that mediates the uptake of L-glutamate and also L-aspartate and D-aspartate. Functions as a symporter that transports one amino acid molecule together with two or three Na(+) ions and one proton, in parallel with the counter-transport of one K(+) ion. Acts primarily as an inhibitory glutamate-gated chloride channel being a major inhibitory presynaptic receptor at mammalian rod bipolar cell axon terminals. Glutamate binding gates a large Cl(-) conductance that mediates inhibition, affecting visual processing in the retina. The sequence is that of Excitatory amino acid transporter 5 from Mus musculus (Mouse).